The following is a 283-amino-acid chain: Bis(5'-nucleosyl)-tetraphosphatase, symmetrical (283 aa).

This sequence belongs to the Ap4A hydrolase family.

It carries out the reaction P(1),P(4)-bis(5'-adenosyl) tetraphosphate + H2O = 2 ADP + 2 H(+). Functionally, hydrolyzes diadenosine 5',5'''-P1,P4-tetraphosphate to yield ADP. The protein is Bis(5'-nucleosyl)-tetraphosphatase, symmetrical of Pseudomonas aeruginosa (strain LESB58).